The chain runs to 172 residues: Large ribosomal subunit protein uL10 (172 aa).

Belongs to the universal ribosomal protein uL10 family. As to quaternary structure, part of the ribosomal stalk of the 50S ribosomal subunit. The N-terminus interacts with L11 and the large rRNA to form the base of the stalk. The C-terminus forms an elongated spine to which L12 dimers bind in a sequential fashion forming a multimeric L10(L12)X complex.

Forms part of the ribosomal stalk, playing a central role in the interaction of the ribosome with GTP-bound translation factors. The protein is Large ribosomal subunit protein uL10 (rplJ) of Chlamydia trachomatis serovar D (strain ATCC VR-885 / DSM 19411 / UW-3/Cx).